A 1820-amino-acid polypeptide reads, in one-letter code: Sodium channel protein (1820 aa).

Residues methionine 1–arginine 117 are Cytoplasmic-facing. The I repeat unit spans residues phenylalanine 108 to glutamine 410. A helical transmembrane segment spans residues valine 118–phenylalanine 138. Residues methionine 139–lysine 149 are Extracellular-facing. The helical transmembrane segment at isoleucine 150 to glycine 171 threads the bilayer. Topologically, residues phenylalanine 172–histidine 176 are cytoplasmic. The chain crosses the membrane as a helical span at residues phenylalanine 177 to isoleucine 197. The Extracellular portion of the chain corresponds to threonine 198 to leucine 203. A helical; Voltage-sensor membrane pass occupies residues arginine 204–phenylalanine 224. Over proline 225–aspartate 243 the chain is Cytoplasmic. Residues valine 244–methionine 264 form a helical membrane-spanning segment. At glycine 265–asparagine 346 the chain is on the extracellular side. Cysteines 271 and 324 form a disulfide. N-linked (GlcNAc...) asparagine glycans are attached at residues asparagine 278, asparagine 288, and asparagine 317. The segment at serine 285–threonine 342 is non-homologous region of repeat I. Positions phenylalanine 347–leucine 371 form an intramembrane region, pore-forming. The Extracellular portion of the chain corresponds to arginine 372–tyrosine 378. Residues methionine 379–alanine 402 form a helical membrane-spanning segment. The Cytoplasmic portion of the chain corresponds to methionine 403 to lysine 557. Positions serine 483–proline 507 are disordered. Positions serine 487–proline 507 are enriched in basic and acidic residues. An II repeat occupies cysteine 548–glutamine 811. The helical transmembrane segment at tryptophan 558–leucine 578 threads the bilayer. The Extracellular segment spans residues asparagine 579 to serine 599. Asparagine 591 carries N-linked (GlcNAc...) asparagine glycosylation. Residues alanine 600–leucine 620 form a helical membrane-spanning segment. Residues aspartate 621–tyrosine 625 are Cytoplasmic-facing. Residues phenylalanine 626–leucine 643 traverse the membrane as a helical segment. Residues glutamate 644 to methionine 650 are Extracellular-facing. A helical; Voltage-sensor transmembrane segment spans residues glutamine 651 to tryptophan 671. Over proline 672–asparagine 690 the chain is Cytoplasmic. The chain crosses the membrane as a helical span at residues leucine 691–glycine 711. Residues lysine 712–aspartate 734 lie on the Extracellular side of the membrane. Positions phenylalanine 735–tryptophan 755 form an intramembrane region, pore-forming. Residues aspartate 756–cysteine 766 lie on the Extracellular side of the membrane. The cysteines at positions 757 and 766 are disulfide-linked. The chain crosses the membrane as a helical span at residues leucine 767–leucine 790. Over serine 791 to threonine 1004 the chain is Cytoplasmic. Disordered stretches follow at residues proline 844–proline 864 and valine 891–proline 959. Residues glutamate 896–aspartate 910 are compositionally biased toward acidic residues. The span at serine 924–glutamate 935 shows a compositional bias: polar residues. The segment covering glutamate 942–glutamate 953 has biased composition (acidic residues). One copy of the III repeat lies at asparagine 988–leucine 1295. Residues phenylalanine 1005–tryptophan 1025 traverse the membrane as a helical segment. Residues arginine 1026–alanine 1037 are Extracellular-facing. The chain crosses the membrane as a helical span at residues aspartate 1038–phenylalanine 1058. Over lysine 1059–alanine 1065 the chain is Cytoplasmic. The chain crosses the membrane as a helical span at residues tryptophan 1066–leucine 1086. Residues glycine 1087–leucine 1091 are Extracellular-facing. The chain crosses the membrane as a helical; Voltage-sensor span at residues glycine 1092–phenylalanine 1112. At glutamate 1113–asparagine 1131 the chain is on the cytoplasmic side. A helical transmembrane segment spans residues valine 1132–alanine 1152. Topologically, residues glycine 1153–alanine 1199 are extracellular. Residues asparagine 1160 and asparagine 1174 are each glycosylated (N-linked (GlcNAc...) asparagine). A non-homologous region of repeat III region spans residues valine 1172–valine 1194. The pore-forming intramembrane region spans glycine 1200–alanine 1221. Over alanine 1222 to tyrosine 1243 the chain is Extracellular. Residues phenylalanine 1244–isoleucine 1264 form a helical membrane-spanning segment. Residues aspartate 1265–threonine 1320 lie on the Cytoplasmic side of the membrane. An IV repeat occupies isoleucine 1304–glutamine 1602. A helical membrane pass occupies residues glutamine 1321–valine 1341. Over glutamate 1342–aspartate 1352 the chain is Extracellular. Residues isoleucine 1353–leucine 1376 form a helical membrane-spanning segment. Over arginine 1377–phenylalanine 1380 the chain is Cytoplasmic. A helical membrane pass occupies residues phenylalanine 1381–isoleucine 1398. The Extracellular segment spans residues glycine 1399–phenylalanine 1416. The chain crosses the membrane as a helical; Voltage-sensor span at residues arginine 1417–isoleucine 1437. At arginine 1438–asparagine 1453 the chain is on the cytoplasmic side. A helical membrane pass occupies residues isoleucine 1454 to alanine 1474. Residues tyrosine 1475 to threonine 1490 lie on the Extracellular side of the membrane. A non-homologous region of repeat IV region spans residues threonine 1490–alanine 1505. The segment at residues phenylalanine 1491–proline 1513 is an intramembrane region (pore-forming). Residues threonine 1514 to glycine 1543 lie on the Extracellular side of the membrane. A helical transmembrane segment spans residues isoleucine 1544–leucine 1567. Residues glutamate 1568–valine 1820 are Cytoplasmic-facing.

Belongs to the sodium channel (TC 1.A.1.10) family.

It is found in the cell membrane. Its function is as follows. Mediates the voltage-dependent sodium ion permeability of excitable membranes. Assuming opened or closed conformations in response to the voltage difference across the membrane, the protein forms a sodium-selective channel through which Na(+) ions may pass in accordance with their electrochemical gradient. The sequence is that of Sodium channel protein from Electrophorus electricus (Electric eel).